Here is a 98-residue protein sequence, read N- to C-terminus: NADH-ubiquinone oxidoreductase chain 4L (98 aa).

A run of 3 helical transmembrane segments spans residues 1–21 (MIPT…GMLT), 27–47 (VASL…ATLI), and 61–81 (IILL…LISI).

This sequence belongs to the complex I subunit 4L family. In terms of assembly, core subunit of respiratory chain NADH dehydrogenase (Complex I) which is composed of 45 different subunits.

It is found in the mitochondrion inner membrane. It catalyses the reaction a ubiquinone + NADH + 5 H(+)(in) = a ubiquinol + NAD(+) + 4 H(+)(out). Functionally, core subunit of the mitochondrial membrane respiratory chain NADH dehydrogenase (Complex I) which catalyzes electron transfer from NADH through the respiratory chain, using ubiquinone as an electron acceptor. Part of the enzyme membrane arm which is embedded in the lipid bilayer and involved in proton translocation. The protein is NADH-ubiquinone oxidoreductase chain 4L (MT-ND4L) of Macaca hecki (Heck's macaque).